Consider the following 198-residue polypeptide: Transcription factor BHLH133 (198 aa).

Residues 114–127 form a basic motif; degenerate region; the sequence is SAESSQSYYAKNRR. A bHLH domain is found at 114-163; sequence SAESSQSYYAKNRRQRINERLRILQELIPNGTKVDISTMLEEAIQYVKFL. A helix-loop-helix motif region spans residues 128 to 163; that stretch reads QRINERLRILQELIPNGTKVDISTMLEEAIQYVKFL.

The protein belongs to the bHLH protein family.

Its subcellular location is the nucleus. Transcription factor that acts as a regulator of iron homeostasis. May act as negative regulator of iron transportation from root to shoot. Does not seem to be involved in the suppression of the induction of iron deficiency responsive genes. The polypeptide is Transcription factor BHLH133 (Oryza sativa subsp. japonica (Rice)).